The primary structure comprises 594 residues: ATP-dependent RNA helicase DDX55 (594 aa).

A Q motif motif is present at residues 9-37 (WDSLPQKLNGSIRRTLEELKFTHMTPVQS). The Helicase ATP-binding domain occupies 40–223 (IPLFMNNKDI…RAGLRNPVRI (184 aa)). 53–60 (AITGSGKT) contacts ATP. The short motif at 171 to 174 (DEAD) is the DEAD box element. One can recognise a Helicase C-terminal domain in the interval 254–411 (KFNKLIAFLQ…DLLPKLKAMA (158 aa)). Positions 486 to 542 (YKDKNREKQRQKMLKERKEKLETEGRKHFAKNKAWSKQKARKEKKQKVALKRKKEEG) form a coiled coil. A compositionally biased stretch (basic and acidic residues) spans 502–512 (RKEKLETEGRK). Residues 502 to 548 (RKEKLETEGRKHFAKNKAWSKQKARKEKKQKVALKRKKEEGSDIDEG) form a disordered region. The segment covering 513 to 537 (HFAKNKAWSKQKARKEKKQKVALKR) has biased composition (basic residues). Residues 532–561 (KVALKRKKEEGSDIDEGDVDELLQDTRLLK) are important for nuclear localization.

Belongs to the DEAD box helicase family. DDX55/SPB4 subfamily. As to quaternary structure, interacts with 28S rRNA. Interacts with double-stranded RNA substrates in vitro; the interaction stimulates ATPase activity.

It localises to the nucleus. The protein resides in the nucleoplasm. It carries out the reaction ATP + H2O = ADP + phosphate + H(+). In terms of biological role, probable ATP-binding RNA helicase. Has ATPase activity and is involved in the maturation of precursor large subunit rRNAs. This chain is ATP-dependent RNA helicase DDX55 (ddx55), found in Xenopus laevis (African clawed frog).